The chain runs to 458 residues: 5'-adenylylsulfate reductase 3, chloroplastic (458 aa).

A disordered region spans residues 1–24; it reads MALAINVSSSSSSAISSSSFPSSD. Residues 1–69 constitute a chloroplast transit peptide; that stretch reads MALAINVSSS…VQSITKESIV (69 aa). Residues 8–23 show a composition bias toward low complexity; that stretch reads SSSSSSAISSSSFPSS. The reductase domain stretch occupies residues 70–319; the sequence is ASEVTEKLDV…KAKECGLHKG (250 aa). Residues 337 to 458 enclose the Thioredoxin domain; that stretch reads ASVADIFNSE…SLTSFLNLVR (122 aa). Active-site nucleophile residues include cysteine 378 and cysteine 381. Cysteine 378 and cysteine 381 are oxidised to a cystine.

Belongs to the APS reductase family. [4Fe-4S] cluster serves as cofactor. In terms of tissue distribution, leaves, roots and stem.

The protein localises to the plastid. The protein resides in the chloroplast. It carries out the reaction glutathione disulfide + sulfite + AMP + 2 H(+) = adenosine 5'-phosphosulfate + 2 glutathione. Its activity is regulated as follows. Stimulated by sodium sulfate &gt; ammonium sulfate. Functionally, reduces sulfate for Cys biosynthesis. Substrate preference is adenosine-5'-phosphosulfate (APS) &gt;&gt; 3'-phosphoadenosine-5'-phosphosulfate (PAPS). Uses glutathione or DTT as source of protons. The chain is 5'-adenylylsulfate reductase 3, chloroplastic (APR3) from Arabidopsis thaliana (Mouse-ear cress).